A 321-amino-acid chain; its full sequence is Probable pectate lyase A (321 aa).

The signal sequence occupies residues 1–20 (MANFKLFLALAACLSGQALA). A glycan (N-linked (GlcNAc...) asparagine) is linked at N93. Ca(2+) is bound by residues D134, D163, and D167. Residue R220 is part of the active site.

It belongs to the polysaccharide lyase 1 family. The cofactor is Ca(2+).

Its subcellular location is the secreted. The catalysed reaction is Eliminative cleavage of (1-&gt;4)-alpha-D-galacturonan to give oligosaccharides with 4-deoxy-alpha-D-galact-4-enuronosyl groups at their non-reducing ends.. In terms of biological role, pectinolytic enzyme consist of four classes of enzymes: pectin lyase, polygalacturonase, pectin methylesterase and rhamnogalacturonase. Among pectinolytic enzymes, pectin lyase is the most important in depolymerization of pectin, since it cleaves internal glycosidic bonds of highly methylated pectins. Favors pectate, the anion, over pectin, the methyl ester. The polypeptide is Probable pectate lyase A (plyA) (Aspergillus flavus (strain ATCC 200026 / FGSC A1120 / IAM 13836 / NRRL 3357 / JCM 12722 / SRRC 167)).